Reading from the N-terminus, the 379-residue chain is Cytochrome b (379 aa).

4 consecutive transmembrane segments (helical) span residues 34–54, 78–100, 113–133, and 179–199; these read YGSL…MLAM, WMIR…VHIG, TWNI…LGYV, and FFSL…IHLL. Residues His-84 and His-98 each coordinate heme b. Heme b is bound by residues His-183 and His-197. His-202 is a binding site for a ubiquinone. Transmembrane regions (helical) follow at residues 225 to 245, 289 to 309, 320 to 340, and 345 to 365; these read FSIK…FLVL, LGGV…PIFS, WSGM…WIGA, and APYI…FFWM.

The protein belongs to the cytochrome b family. As to quaternary structure, the main subunits of complex b-c1 are: cytochrome b, cytochrome c1 and the Rieske protein. It depends on heme b as a cofactor.

It localises to the mitochondrion inner membrane. Component of the ubiquinol-cytochrome c reductase complex (complex III or cytochrome b-c1 complex) that is part of the mitochondrial respiratory chain. The b-c1 complex mediates electron transfer from ubiquinol to cytochrome c. Contributes to the generation of a proton gradient across the mitochondrial membrane that is then used for ATP synthesis. The polypeptide is Cytochrome b (mt:Cyt-b) (Epiperipatus biolleyi (Velvet worm)).